The primary structure comprises 180 residues: Acireductone dioxygenase (180 aa).

Fe(2+) contacts are provided by H97, H99, E103, and H141. Positions 97, 99, 103, and 141 each coordinate Ni(2+).

This sequence belongs to the acireductone dioxygenase (ARD) family. In terms of assembly, monomer. Requires Fe(2+) as cofactor. It depends on Ni(2+) as a cofactor.

It carries out the reaction 1,2-dihydroxy-5-(methylsulfanyl)pent-1-en-3-one + O2 = 3-(methylsulfanyl)propanoate + CO + formate + 2 H(+). It catalyses the reaction 1,2-dihydroxy-5-(methylsulfanyl)pent-1-en-3-one + O2 = 4-methylsulfanyl-2-oxobutanoate + formate + 2 H(+). It participates in amino-acid biosynthesis; L-methionine biosynthesis via salvage pathway; L-methionine from S-methyl-5-thio-alpha-D-ribose 1-phosphate: step 5/6. Catalyzes 2 different reactions between oxygen and the acireductone 1,2-dihydroxy-3-keto-5-methylthiopentene (DHK-MTPene) depending upon the metal bound in the active site. Fe-containing acireductone dioxygenase (Fe-ARD) produces formate and 2-keto-4-methylthiobutyrate (KMTB), the alpha-ketoacid precursor of methionine in the methionine recycle pathway. Ni-containing acireductone dioxygenase (Ni-ARD) produces methylthiopropionate, carbon monoxide and formate, and does not lie on the methionine recycle pathway. In Yersinia pseudotuberculosis serotype O:1b (strain IP 31758), this protein is Acireductone dioxygenase.